A 291-amino-acid chain; its full sequence is ATP synthase gamma chain (291 aa).

The protein belongs to the ATPase gamma chain family. In terms of assembly, F-type ATPases have 2 components, CF(1) - the catalytic core - and CF(0) - the membrane proton channel. CF(1) has five subunits: alpha(3), beta(3), gamma(1), delta(1), epsilon(1). CF(0) has three main subunits: a, b and c.

The protein localises to the cell inner membrane. In terms of biological role, produces ATP from ADP in the presence of a proton gradient across the membrane. The gamma chain is believed to be important in regulating ATPase activity and the flow of protons through the CF(0) complex. The chain is ATP synthase gamma chain from Rhodopseudomonas palustris (strain ATCC BAA-98 / CGA009).